The chain runs to 356 residues: Cytochrome c oxidase subunit 2 (356 aa).

Positions 1 to 23 (MNKGLCNWRLFSLFGMMALLLAG) are cleaved as a signal peptide. Residues 24–259 (CGKPFLSTLQ…QNAKKPVVTD (236 aa)) are cytochrome c oxidase subunit II. 2 helical membrane-spanning segments follow: residues 45–65 (LMLL…IIFV) and 93–113 (IIWT…TVLT). Cu cation-binding residues include histidine 178, cysteine 219, cysteine 223, and histidine 227. The 97-residue stretch at 260–356 (PVAKEGEAIF…TKYLMSLKVE (97 aa)) folds into the Cytochrome c domain. 4 residues coordinate heme c: cysteine 273, cysteine 276, histidine 277, and methionine 331.

The protein belongs to the cytochrome c oxidase subunit 2 family. The cofactor is Cu cation. Requires heme c as cofactor.

The protein resides in the cell membrane. It catalyses the reaction 4 Fe(II)-[cytochrome c] + O2 + 8 H(+)(in) = 4 Fe(III)-[cytochrome c] + 2 H2O + 4 H(+)(out). Functionally, subunits I and II form the functional core of the enzyme complex. Electrons originating in cytochrome c are transferred via heme a and Cu(A) to the binuclear center formed by heme a3 and Cu(B). In Bacillus sp. (strain PS3), this protein is Cytochrome c oxidase subunit 2 (ctaC).